The chain runs to 755 residues: Kojibiose phosphorylase (755 aa).

Trp-333–Asp-334 lines the substrate pocket. The active-site Proton donor is Glu-473. Lys-573–Gln-574 contributes to the substrate binding site.

This sequence belongs to the glycosyl hydrolase 65 family.

The enzyme catalyses kojibiose + phosphate = beta-D-glucose 1-phosphate + D-glucose. In vitro catalyzes the phosphorolysis of D-kojibiose into beta-D-glucose 1-phosphate and D-glucose. No other disaccharides tested substitute for D-kojibiose. In the reverse direction disaccharides can be formed from beta-D-glucose 1-phosphate plus D-glucose, L-sorbose, D-sorbitol, L-iditol or 1,5-anhydro-D-glucitol, but with low efficiency. The beta-D-glucose 1-phosphate product is the substrate for YcjU (AC P77366), the next apparent enzyme in the putative biochemical pathway encoded in this locus (yjcM to ycjW). The chain is Kojibiose phosphorylase (ycjT) from Escherichia coli (strain K12).